Reading from the N-terminus, the 123-residue chain is Protein HesB, heterocyst (123 aa).

This sequence belongs to the HesB/IscA family.

Its function is as follows. May be required for efficient nitrogen fixation. In Trichormus variabilis (strain ATCC 29413 / PCC 7937) (Anabaena variabilis), this protein is Protein HesB, heterocyst (hesB1).